The primary structure comprises 290 residues: Hydroxyacylglutathione hydrolase-like protein (290 aa).

Zn(2+) is bound by residues H54, H56, D58, H59, H110, D134, and H172.

The protein belongs to the metallo-beta-lactamase superfamily. Glyoxalase II family. Zn(2+) serves as cofactor.

Its function is as follows. Hydrolase acting on ester bonds. The polypeptide is Hydroxyacylglutathione hydrolase-like protein (HAGHL) (Homo sapiens (Human)).